Here is a 185-residue protein sequence, read N- to C-terminus: Ribosome-recycling factor (185 aa).

The protein belongs to the RRF family.

The protein localises to the cytoplasm. Functionally, responsible for the release of ribosomes from messenger RNA at the termination of protein biosynthesis. May increase the efficiency of translation by recycling ribosomes from one round of translation to another. In Finegoldia magna (strain ATCC 29328 / DSM 20472 / WAL 2508) (Peptostreptococcus magnus), this protein is Ribosome-recycling factor.